Consider the following 126-residue polypeptide: UPF0102 protein gll3754 (126 aa).

Belongs to the UPF0102 family.

The polypeptide is UPF0102 protein gll3754 (Gloeobacter violaceus (strain ATCC 29082 / PCC 7421)).